A 510-amino-acid polypeptide reads, in one-letter code: Glycerol kinase (510 aa).

Thr13 is a binding site for ADP. Residues Thr13 and Thr14 each coordinate ATP. Thr13 contacts sn-glycerol 3-phosphate. Arg17 is a binding site for ADP. The sn-glycerol 3-phosphate site is built by Arg83, Glu84, Tyr135, and Asp255. The glycerol site is built by Arg83, Glu84, Tyr135, Asp255, and Gln256. ADP is bound by residues Thr277, Gly321, Gly421, and Asn425. Thr277, Gly321, and Gly421 together coordinate ATP.

The protein belongs to the FGGY kinase family.

The enzyme catalyses glycerol + ATP = sn-glycerol 3-phosphate + ADP + H(+). Its pathway is polyol metabolism; glycerol degradation via glycerol kinase pathway; sn-glycerol 3-phosphate from glycerol: step 1/1. Its function is as follows. Key enzyme in the regulation of glycerol uptake and metabolism. Catalyzes the phosphorylation of glycerol to yield sn-glycerol 3-phosphate. This is Glycerol kinase from Haloarcula marismortui (strain ATCC 43049 / DSM 3752 / JCM 8966 / VKM B-1809) (Halobacterium marismortui).